The sequence spans 153 residues: Cytochrome c-type biogenesis protein CcmE (153 aa).

Residues 1-8 (MATRRGRR) lie on the Cytoplasmic side of the membrane. A helical; Signal-anchor for type II membrane protein transmembrane segment spans residues 9–29 (ALLIAGGVGLLALAAALVLNA). The Periplasmic portion of the chain corresponds to 30–153 (LRSNLVFFFS…PSATLQTEAR (124 aa)). Residues His-124 and Tyr-128 each coordinate heme.

The protein belongs to the CcmE/CycJ family.

Its subcellular location is the cell inner membrane. Functionally, heme chaperone required for the biogenesis of c-type cytochromes. Transiently binds heme delivered by CcmC and transfers the heme to apo-cytochromes in a process facilitated by CcmF and CcmH. The chain is Cytochrome c-type biogenesis protein CcmE from Bordetella bronchiseptica (strain ATCC BAA-588 / NCTC 13252 / RB50) (Alcaligenes bronchisepticus).